The sequence spans 188 residues: MTVANSASISADIAGRYAQALFDLVRDSGGIDALSSQIDDLASAYDASQDLRDLTLSPLYDRQQQEAAVGALSERMGLSAELANTLRLLARNRRLFTLPQFVAKLRNLIADAKGEVTADVVSAQALTDEQKARLADTLAAKSGKTVKLNARVDESLIGGMIVKLGSQMIDSSIRSKLASLQNAMKEVG.

Belongs to the ATPase delta chain family. F-type ATPases have 2 components, F(1) - the catalytic core - and F(0) - the membrane proton channel. F(1) has five subunits: alpha(3), beta(3), gamma(1), delta(1), epsilon(1). F(0) has three main subunits: a(1), b(2) and c(10-14). The alpha and beta chains form an alternating ring which encloses part of the gamma chain. F(1) is attached to F(0) by a central stalk formed by the gamma and epsilon chains, while a peripheral stalk is formed by the delta and b chains.

It localises to the cell inner membrane. In terms of biological role, f(1)F(0) ATP synthase produces ATP from ADP in the presence of a proton or sodium gradient. F-type ATPases consist of two structural domains, F(1) containing the extramembraneous catalytic core and F(0) containing the membrane proton channel, linked together by a central stalk and a peripheral stalk. During catalysis, ATP synthesis in the catalytic domain of F(1) is coupled via a rotary mechanism of the central stalk subunits to proton translocation. Its function is as follows. This protein is part of the stalk that links CF(0) to CF(1). It either transmits conformational changes from CF(0) to CF(1) or is implicated in proton conduction. The polypeptide is ATP synthase subunit delta (Paracoccus denitrificans (strain Pd 1222)).